We begin with the raw amino-acid sequence, 412 residues long: MTKIKVANPIVEMDGDEQTRIIWHLIRDKLVLPYLDVDLKYYDLSVEYRDQTNDQVTVDSATATLKYGVAVKCATITPDEARVEEFHLKKMWKSPNGTIRNILGGTVFREPIIIPRIPRLVPQWEKPIIIGRHAFGDQYKATDVIVPEEGELRLVYKSKSGTHDVDLKVFDYPEHGGVAMMMYNTTDSIEGFAKASFELAIERKLPLYSTTKNTILKKYDGKFKDVFEAMYARSYKEKFESLGIWYEHRLIDDMVAQMLKSKGGYIIAMKNYDGDVESDIVAQGFGSLGLMTSVLITPDGKTFESEAAHGTVTRHFRQHQQGKETSTNSIASIFAWTRGIIQRGKLDNTPDVVKFGQILESATVNTVQEDGIMTKDLALILGKSERSAYVTTEEFIDAVESRLKKEFEAAAL.

NADP(+) contacts are provided by residues 75–77 (TIT) and arginine 82. Residue threonine 77 participates in substrate binding. Substrate is bound by residues 94–100 (SPNGTIR), arginine 109, and arginine 132. Mn(2+) is bound at residue aspartate 252. An NADP(+)-binding site is contributed by lysine 260. Residue aspartate 275 coordinates Mn(2+). NADP(+) contacts are provided by residues 310-315 (GTVTRH) and asparagine 328.

Belongs to the isocitrate and isopropylmalate dehydrogenases family. As to quaternary structure, homodimer. The cofactor is Mg(2+). Requires Mn(2+) as cofactor. The N-terminus is blocked.

It localises to the cytoplasm. It carries out the reaction D-threo-isocitrate + NADP(+) = 2-oxoglutarate + CO2 + NADPH. By catabolite repression. In terms of biological role, may function in the production of NADPH for fatty acid and sterol synthesis. The sequence is that of Isocitrate dehydrogenase [NADP] cytoplasmic (IDP2) from Saccharomyces cerevisiae (strain ATCC 204508 / S288c) (Baker's yeast).